Consider the following 261-residue polypeptide: Ribonuclease HII (261 aa).

Residues 1–20 show a composition bias toward basic and acidic residues; the sequence is MIRDKSAKRPAKDAPKKAAV. The interval 1 to 23 is disordered; the sequence is MIRDKSAKRPAKDAPKKAAVKEA. An RNase H type-2 domain is found at 42–230; it reads WPVAGCDEAG…VAAARAKHMP (189 aa). A divalent metal cation contacts are provided by Asp-48, Glu-49, and Asp-139.

It belongs to the RNase HII family. Mn(2+) is required as a cofactor. Requires Mg(2+) as cofactor.

It is found in the cytoplasm. The enzyme catalyses Endonucleolytic cleavage to 5'-phosphomonoester.. Its function is as follows. Endonuclease that specifically degrades the RNA of RNA-DNA hybrids. This Bradyrhizobium diazoefficiens (strain JCM 10833 / BCRC 13528 / IAM 13628 / NBRC 14792 / USDA 110) protein is Ribonuclease HII.